Consider the following 237-residue polypeptide: Ribonuclease PH (237 aa).

Phosphate contacts are provided by residues Arg86 and 124–126 (GTR).

Belongs to the RNase PH family. In terms of assembly, homohexameric ring arranged as a trimer of dimers.

It carries out the reaction tRNA(n+1) + phosphate = tRNA(n) + a ribonucleoside 5'-diphosphate. Its function is as follows. Phosphorolytic 3'-5' exoribonuclease that plays an important role in tRNA 3'-end maturation. Removes nucleotide residues following the 3'-CCA terminus of tRNAs; can also add nucleotides to the ends of RNA molecules by using nucleoside diphosphates as substrates, but this may not be physiologically important. Probably plays a role in initiation of 16S rRNA degradation (leading to ribosome degradation) during starvation. In Zymomonas mobilis subsp. mobilis (strain ATCC 31821 / ZM4 / CP4), this protein is Ribonuclease PH.